Consider the following 375-residue polypeptide: Trichodiene synthase (375 aa).

This sequence belongs to the trichodiene synthase family.

The catalysed reaction is (2E,6E)-farnesyl diphosphate = trichodiene + diphosphate. Its pathway is sesquiterpene biosynthesis; trichothecene biosynthesis. Functionally, TS is a member of the terpene cyclase group of enzymes. It catalyzes the isomerization and cyclization of farnesyl pyro-phosphate to form trichodiene, the first cyclic intermediate in the biosynthetic pathway for trichothecenes. It serves to branch trichothecene biosynthesis from the isoprenoid pathway. In Fusarium acaciae-mearnsii, this protein is Trichodiene synthase (TRI5).